The sequence spans 1357 residues: MDILETSFRLEDVLSSYYRVEKVVRVNYQQFVPRTPDDQWCIQSELLIRKKDPKALVALFSRELWCFSINDQDLPMPGLEGIGEPPNSEKKGHFTPGFSKPNLPTPYAIFLKALRRMIHINMCLRSQNRLVPFGNTCIFQRDEKASSVIHFDSHLFENGDLTVSLCTKDMGFERLLSGAFTGRQVKRALYLAPSGIRAYLPFPDISKCLVAPPKNAHLLLVTLLVSHGIDLTQAKDLKWIKLVPNINHLNGYTPTISRYAEESQTSKSVIWPMDLCFQQTPADACVNTTRATPLDIGLQDSFDLIEDFIQLKLTSAYRIPGTSVNANTATGNNPLSTGGGFTDQFQPFVKHTNSSSCNYGPASRTKLTPSKAQDLRRSAAPLSADSFGNGFMTTPNVNENMGSVIDDMVICPSSVKSQNDLWNDRKSSNDDIDSINPTSQQGDSARITSGSEEQDVEVTFDKDLFGDEDDESDLFGDSSNKSTHRKEVREITDEMFDSAEIESDPEGKITPTGTSINYSTQQQTPLKRKYLDIPLDEITLPAAPLYTDPGAPLPVETPRDRRKSVFAPLNFNPMIESNVDNKYKNGGKFSFDPNEIDEPLKFEVSTTNISSSEEDDSEFSGDDFDELQQNNLQDIRAMEVGSSLQQYDMGRPINEFLNQSDSAKEDYLLPAYQSGDVIDVDKFPSRESHLDQIWKSPEINREDTPHRIGLPIIKPQLDGSGNLDIDNQITDNCSSNYYEPTPVVGADEKIQERTLHKDKKLDQQGDSAMASVVGDYSLAIKETRESSNGLPFLLRHMPLFSIPDVFLSKNPIVKVDSKLEDFLEILCEQLVFDQGFLGNFDVDPPTYKDVKLNEKGVIRETLNSVFSEFERLRGNEIISDMFYIKQPSVCVKKHGNLIKLKSDAESFAPLLHLKPSRGMKSFRGLFLTTILTQTCVSFITELAHIYSAQELGFCELVKLTNDEHNGLIVLNNFNTDTLLLLSAQIVSYCSTNMNNVKNIPLMIFLPVAPSSLEATITMTSKFQLIKNEVKSRLPDVELLLKLIPFDLTKDPVIMIDRYYELCRGIYNLLPPRTVKFASIADNLPEQVEFRTSAGNQNQLSHYDSYIHLAYTRSIDREWLAAAWSDSKGTENMVKAWYLGNSKARFETACNELWKLTVELASRKYGRICLILTRMDSVLPDDELMHWRRLSVTTRNLHLAVVCVGASTKVSLYDEDQFYPSFKPLFKDKRYANKIQANQLDDYEVVNIDEELHGVVFSSPLQLANSQHRCAIKSGALVRFKRCAGGDTLDKFEVNLLNCPHSDSTKLLKTILHQFRDIASLNTWFCISRGKDNYIPWHVVAVKKIMRFIIHVNGIEEK.

2 disordered regions span residues 356–391 (SCNYGPASRTKLTPSKAQDLRRSAAPLSADSFGNGF) and 420–487 (DLWN…HRKE). Residues 435–451 (INPTSQQGDSARITSGS) are compositionally biased toward polar residues.

Belongs to the Mediator complex subunit 13 family. As to quaternary structure, component of the SRB8-11 complex, which itself associates with the Mediator complex.

It localises to the nucleus. Functionally, component of the SRB8-11 complex. The SRB8-11 complex is a regulatory module of the Mediator complex which is itself involved in regulation of basal and activated RNA polymerase II-dependent transcription. The SRB8-11 complex may be involved in the transcriptional repression of a subset of genes regulated by Mediator. It may inhibit the association of the Mediator complex with RNA polymerase II to form the holoenzyme complex. The chain is Mediator of RNA polymerase II transcription subunit 13 (SSN2) from Eremothecium gossypii (strain ATCC 10895 / CBS 109.51 / FGSC 9923 / NRRL Y-1056) (Yeast).